Here is a 603-residue protein sequence, read N- to C-terminus: Elongation factor 4 (603 aa).

Positions 7 to 189 constitute a tr-type G domain; it reads VRIRNFCIIA…AVVERIPPPP (183 aa). Residues 19 to 24 and 136 to 139 contribute to the GTP site; these read DHGKST and NKID.

This sequence belongs to the TRAFAC class translation factor GTPase superfamily. Classic translation factor GTPase family. LepA subfamily.

The protein localises to the cell inner membrane. It carries out the reaction GTP + H2O = GDP + phosphate + H(+). In terms of biological role, required for accurate and efficient protein synthesis under certain stress conditions. May act as a fidelity factor of the translation reaction, by catalyzing a one-codon backward translocation of tRNAs on improperly translocated ribosomes. Back-translocation proceeds from a post-translocation (POST) complex to a pre-translocation (PRE) complex, thus giving elongation factor G a second chance to translocate the tRNAs correctly. Binds to ribosomes in a GTP-dependent manner. The protein is Elongation factor 4 of Trichormus variabilis (strain ATCC 29413 / PCC 7937) (Anabaena variabilis).